Consider the following 323-residue polypeptide: Forkhead transcription factor fkh-6 (323 aa).

Residues 21 to 122 constitute a DNA-binding region (fork-head); it reads KPPYSYVALI…DNGNFKRRRV (102 aa).

It localises to the nucleus. In terms of biological role, probable transcription factor. Binds to the DNA sequence motif 5'-[TA]TGTT[TG]T[TG][ATG]TT-3'. Regulates sexual dimorphism in the gonad, promoting male gonadal cell fates in chromosomally (XO) male animals, yet plays a role in gonadogenesis in both sexes; probably acts downstream of terminal regulator of sex determination tra-1, to control early gonadogenesis. Positively modulates expression of homeobox protein egl-5, probably acting indirectly, during early gonadal development. This Caenorhabditis elegans protein is Forkhead transcription factor fkh-6.